The primary structure comprises 1966 residues: Alpha-protein kinase 2 (1966 aa).

6 disordered regions span residues 23–65 (NSSP…STGL), 211–231 (AMNSEQSPDQPFSIASNDTDK), 1211–1259 (LKSN…AYSD), 1303–1365 (SLPN…EGAG), 1386–1423 (KTQGKKKKKHVQHGTPKPENDAPTDVRSESRQKNVNGK), and 1437–1463 (NKPVAQPSGKTDITKKDSAQKVMSVRP). Residues 211 to 227 (AMNSEQSPDQPFSIASN) show a composition bias toward polar residues. Low complexity predominate over residues 1211–1221 (LKSNKKSSSSD). The segment covering 1325–1342 (SDGKMRSKHKEKPDDKQQ) has biased composition (basic and acidic residues). Residues 1388–1397 (QGKKKKKHVQ) show a composition bias toward basic residues. Positions 1401–1417 (PKPENDAPTDVRSESRQ) are enriched in basic and acidic residues. In terms of domain architecture, Ig-like spans 1577-1659 (PRVVSEIQAD…SLIVANISVS (83 aa)). The cysteines at positions 1599 and 1649 are disulfide-linked. Residues 1702 to 1934 (KEDFLSDQYF…YCELLGLVSL (233 aa)) enclose the Alpha-type protein kinase domain. The interval 1937–1966 (KPKRTVAPPKPKTQPVPKKKTFGPVLNAKS) is disordered.

It belongs to the protein kinase superfamily. Alpha-type protein kinase family. ALPK subfamily. In terms of tissue distribution, expressed in developing cardiac tissue.

The protein localises to the basolateral cell membrane. The enzyme catalyses L-seryl-[protein] + ATP = O-phospho-L-seryl-[protein] + ADP + H(+). It carries out the reaction L-threonyl-[protein] + ATP = O-phospho-L-threonyl-[protein] + ADP + H(+). In terms of biological role, protein kinase that recognizes phosphorylation sites in which the surrounding peptides have an alpha-helical conformation. Regulates cardiac development and cardiomyocyte differentiation by negatively regulating Wnt/beta-catenin signaling. The protein is Alpha-protein kinase 2 (alpk2) of Danio rerio (Zebrafish).